Consider the following 819-residue polypeptide: USP6 N-terminal-like protein (819 aa).

Residue M1 is modified to N-acetylmethionine. Positions 100–292 constitute a Rab-GAP TBC domain; sequence GIPLQLRGEV…RIWDIYIFEG (193 aa). The span at 355–367 shows a compositional bias: basic and acidic residues; that stretch reads DLPEPGKEDEYPK. 2 disordered regions span residues 355 to 498 and 513 to 678; these read DLPE…ERTT and LPVA…SRPT. Phosphoserine is present on residues S389, S394, and S398. Basic and acidic residues-rich tracts occupy residues 399-414 and 432-449; these read SRRE…EHSP and KSVD…ESQR. The span at 464 to 476 shows a compositional bias: low complexity; it reads HAAANQNSNAISN. Basic and acidic residues-rich tracts occupy residues 477–489 and 533–542; these read VRKE…RKPS and KALDGGEGKR. 2 positions are modified to phosphoserine: S544 and S547. Residues 556-571 are compositionally biased toward basic and acidic residues; sequence ESEHGASAEEGPERTH. 7 positions are modified to phosphoserine: S574, S631, S644, S648, S665, S669, and S704. Polar residues predominate over residues 642-655; sequence FVSTQISPRPQINP. Y717 is subject to Phosphotyrosine. Low complexity predominate over residues 788–802; that stretch reads ASPPGYPYAGPSPSA. The segment at 788–807 is disordered; the sequence is ASPPGYPYAGPSPSAHHYRN.

In terms of assembly, interacts with EPS8.

The protein localises to the golgi apparatus. It localises to the cytoplasmic vesicle. Functionally, acts as a GTPase-activating protein for RAB5A and RAB43. Involved in receptor trafficking. In complex with EPS8 inhibits internalization of EGFR. Involved in retrograde transport from the endocytic pathway to the Golgi apparatus. Involved in the transport of Shiga toxin from early and recycling endosomes to the trans-Golgi network. Required for structural integrity of the Golgi complex. The sequence is that of USP6 N-terminal-like protein (Usp6nl) from Mus musculus (Mouse).